The chain runs to 580 residues: Arginine--tRNA ligase (580 aa).

Residues 131–141 (ANPTGPMHVGH) carry the 'HIGH' region motif.

The protein belongs to the class-I aminoacyl-tRNA synthetase family. Monomer.

The protein resides in the cytoplasm. It carries out the reaction tRNA(Arg) + L-arginine + ATP = L-arginyl-tRNA(Arg) + AMP + diphosphate. This Cereibacter sphaeroides (strain ATCC 17029 / ATH 2.4.9) (Rhodobacter sphaeroides) protein is Arginine--tRNA ligase.